Here is a 185-residue protein sequence, read N- to C-terminus: Adenine phosphoribosyltransferase (185 aa).

The protein belongs to the purine/pyrimidine phosphoribosyltransferase family. As to quaternary structure, homodimer.

The protein localises to the cytoplasm. It carries out the reaction AMP + diphosphate = 5-phospho-alpha-D-ribose 1-diphosphate + adenine. The protein operates within purine metabolism; AMP biosynthesis via salvage pathway; AMP from adenine: step 1/1. Its function is as follows. Catalyzes a salvage reaction resulting in the formation of AMP, that is energically less costly than de novo synthesis. The sequence is that of Adenine phosphoribosyltransferase from Pectobacterium carotovorum subsp. carotovorum (strain PC1).